Consider the following 220-residue polypeptide: 3-keto-L-gulonate-6-phosphate decarboxylase SgbH (220 aa).

Asp-11 lines the substrate pocket. The Mg(2+) site is built by Glu-33 and Asp-62. Arg-192 is a substrate binding site.

It belongs to the HPS/KGPDC family. KGPDC subfamily. In terms of assembly, homodimer. Requires Mg(2+) as cofactor.

It carries out the reaction 3-dehydro-L-gulonate 6-phosphate + H(+) = L-xylulose 5-phosphate + CO2. Catalyzes the decarboxylation of 3-keto-L-gulonate-6-P into L-xylulose-5-P. May be involved in the utilization of 2,3-diketo-L-gulonate. The polypeptide is 3-keto-L-gulonate-6-phosphate decarboxylase SgbH (sgbH) (Escherichia coli (strain K12)).